The chain runs to 414 residues: Histidinol dehydrogenase (414 aa).

NAD(+) is bound by residues Y116, Q177, and N200. 3 residues coordinate substrate: T223, Q245, and H248. Zn(2+) is bound by residues Q245 and H248. Active-site proton acceptor residues include E313 and H314. Substrate contacts are provided by H314, D347, E401, and H406. A Zn(2+)-binding site is contributed by D347. Residue H406 coordinates Zn(2+).

It belongs to the histidinol dehydrogenase family. The cofactor is Zn(2+).

It catalyses the reaction L-histidinol + 2 NAD(+) + H2O = L-histidine + 2 NADH + 3 H(+). The protein operates within amino-acid biosynthesis; L-histidine biosynthesis; L-histidine from 5-phospho-alpha-D-ribose 1-diphosphate: step 9/9. Catalyzes the sequential NAD-dependent oxidations of L-histidinol to L-histidinaldehyde and then to L-histidine. In Staphylococcus epidermidis (strain ATCC 12228 / FDA PCI 1200), this protein is Histidinol dehydrogenase.